The sequence spans 288 residues: tRNA dimethylallyltransferase (288 aa).

Position 2–9 (2–9 (GPTAAGKS)) interacts with ATP. 4 to 9 (TAAGKS) is a binding site for substrate. Residues 27-30 (DSMQ) form an interaction with substrate tRNA region.

It belongs to the IPP transferase family. Monomer. Requires Mg(2+) as cofactor.

It carries out the reaction adenosine(37) in tRNA + dimethylallyl diphosphate = N(6)-dimethylallyladenosine(37) in tRNA + diphosphate. Its function is as follows. Catalyzes the transfer of a dimethylallyl group onto the adenine at position 37 in tRNAs that read codons beginning with uridine, leading to the formation of N6-(dimethylallyl)adenosine (i(6)A). This Frankia alni (strain DSM 45986 / CECT 9034 / ACN14a) protein is tRNA dimethylallyltransferase.